The sequence spans 138 residues: Acidic phospholipase A2 ammodytin I1 (138 aa).

The N-terminal stretch at 1-16 (MRILWIVAVCLIGAEG) is a signal peptide. 7 cysteine pairs are disulfide-bonded: cysteine 42/cysteine 131, cysteine 44/cysteine 60, cysteine 59/cysteine 111, cysteine 65/cysteine 138, cysteine 66/cysteine 104, cysteine 73/cysteine 97, and cysteine 91/cysteine 102. 3 residues coordinate Ca(2+): tyrosine 43, glycine 45, and glycine 47. Histidine 63 is a catalytic residue. Aspartate 64 serves as a coordination point for Ca(2+). Residue aspartate 105 is part of the active site.

The protein belongs to the phospholipase A2 family. Group II subfamily. D49 sub-subfamily. Ca(2+) serves as cofactor. As to expression, expressed by the venom gland.

Its subcellular location is the secreted. The enzyme catalyses a 1,2-diacyl-sn-glycero-3-phosphocholine + H2O = a 1-acyl-sn-glycero-3-phosphocholine + a fatty acid + H(+). In terms of biological role, snake venom phospholipase A2 (PLA2) that has enzymatic activity but is non-toxic. PLA2 catalyzes the calcium-dependent hydrolysis of the 2-acyl groups in 3-sn-phosphoglycerides. The chain is Acidic phospholipase A2 ammodytin I1 from Vipera ammodytes ammodytes (Western sand viper).